Reading from the N-terminus, the 215-residue chain is Cytochrome b6 (215 aa).

Residues 32-52 traverse the membrane as a helical segment; the sequence is IFYCLGGITLTCFLVQVATGF. C35 is a binding site for heme c. Positions 86 and 100 each coordinate heme b. 3 consecutive transmembrane segments (helical) span residues 90–110, 116–136, and 186–206; these read ASMM…TGGF, LTWV…VTGY, and LHTF…FPMI. Heme b is bound by residues H187 and H202.

This sequence belongs to the cytochrome b family. PetB subfamily. The 4 large subunits of the cytochrome b6-f complex are cytochrome b6, subunit IV (17 kDa polypeptide, PetD), cytochrome f and the Rieske protein, while the 4 small subunits are PetG, PetL, PetM and PetN. The complex functions as a dimer. The cofactor is heme b. It depends on heme c as a cofactor.

It localises to the plastid. The protein resides in the chloroplast thylakoid membrane. In terms of biological role, component of the cytochrome b6-f complex, which mediates electron transfer between photosystem II (PSII) and photosystem I (PSI), cyclic electron flow around PSI, and state transitions. In Jasminum nudiflorum (Winter jasmine), this protein is Cytochrome b6.